A 183-amino-acid chain; its full sequence is NADH-quinone oxidoreductase subunit B (183 aa).

[4Fe-4S] cluster contacts are provided by C60, C61, C125, and C154.

The protein belongs to the complex I 20 kDa subunit family. In terms of assembly, NDH-1 is composed of 14 different subunits. Subunits NuoB, C, D, E, F, and G constitute the peripheral sector of the complex. [4Fe-4S] cluster serves as cofactor.

The protein localises to the cell inner membrane. It catalyses the reaction a quinone + NADH + 5 H(+)(in) = a quinol + NAD(+) + 4 H(+)(out). In terms of biological role, NDH-1 shuttles electrons from NADH, via FMN and iron-sulfur (Fe-S) centers, to quinones in the respiratory chain. The immediate electron acceptor for the enzyme in this species is believed to be ubiquinone. Couples the redox reaction to proton translocation (for every two electrons transferred, four hydrogen ions are translocated across the cytoplasmic membrane), and thus conserves the redox energy in a proton gradient. This is NADH-quinone oxidoreductase subunit B from Desulfovibrio desulfuricans (strain ATCC 27774 / DSM 6949 / MB).